Consider the following 462-residue polypeptide: ATP synthase subunit beta (462 aa).

151 to 158 (GGAGVGKT) is an ATP binding site.

This sequence belongs to the ATPase alpha/beta chains family. As to quaternary structure, F-type ATPases have 2 components, CF(1) - the catalytic core - and CF(0) - the membrane proton channel. CF(1) has five subunits: alpha(3), beta(3), gamma(1), delta(1), epsilon(1). CF(0) has four main subunits: a(1), b(1), b'(1) and c(9-12).

Its subcellular location is the cell inner membrane. It catalyses the reaction ATP + H2O + 4 H(+)(in) = ADP + phosphate + 5 H(+)(out). Its function is as follows. Produces ATP from ADP in the presence of a proton gradient across the membrane. The catalytic sites are hosted primarily by the beta subunits. The polypeptide is ATP synthase subunit beta (Chlorobium chlorochromatii (strain CaD3)).